Consider the following 591-residue polypeptide: Probable indole-3-acetic acid-amido synthetase GH3.11 (591 aa).

It belongs to the IAA-amido conjugating enzyme family. Expressed in etiolated and green seedlings, roots, callus and highly in flowers.

Functionally, may catalyze the synthesis of indole-3-acetic acid (IAA)-amino acid conjugates, providing a mechanism for the plant to cope with the presence of excess auxin. The polypeptide is Probable indole-3-acetic acid-amido synthetase GH3.11 (GH3.11) (Oryza sativa subsp. japonica (Rice)).